Consider the following 88-residue polypeptide: ATP synthase subunit c 1 (88 aa).

Helical transmembrane passes span Phe-4–Ile-24 and Ile-53–Leu-73.

Belongs to the ATPase C chain family. F-type ATPases have 2 components, F(1) - the catalytic core - and F(0) - the membrane proton channel. F(1) has five subunits: alpha(3), beta(3), gamma(1), delta(1), epsilon(1). F(0) has three main subunits: a(1), b(2) and c(10-14). The alpha and beta chains form an alternating ring which encloses part of the gamma chain. F(1) is attached to F(0) by a central stalk formed by the gamma and epsilon chains, while a peripheral stalk is formed by the delta and b chains.

Its subcellular location is the cell inner membrane. In terms of biological role, f(1)F(0) ATP synthase produces ATP from ADP in the presence of a proton or sodium gradient. F-type ATPases consist of two structural domains, F(1) containing the extramembraneous catalytic core and F(0) containing the membrane proton channel, linked together by a central stalk and a peripheral stalk. During catalysis, ATP synthesis in the catalytic domain of F(1) is coupled via a rotary mechanism of the central stalk subunits to proton translocation. Functionally, key component of the F(0) channel; it plays a direct role in translocation across the membrane. A homomeric c-ring of between 10-14 subunits forms the central stalk rotor element with the F(1) delta and epsilon subunits. The polypeptide is ATP synthase subunit c 1 (Syntrophotalea carbinolica (strain DSM 2380 / NBRC 103641 / GraBd1) (Pelobacter carbinolicus)).